The primary structure comprises 307 residues: Malate dehydrogenase (307 aa).

NAD(+) contacts are provided by residues G8 to G13 and D32. Residues R81 and R87 each contribute to the substrate site. NAD(+) is bound by residues N94 and V117–N119. The substrate site is built by N119 and R150. The active-site Proton acceptor is the H174.

The protein belongs to the LDH/MDH superfamily.

The catalysed reaction is (S)-malate + NAD(+) = oxaloacetate + NADH + H(+). In terms of biological role, catalyzes the reversible oxidation of malate to oxaloacetate. The sequence is that of Malate dehydrogenase (mdh) from Methanosarcina barkeri (strain Fusaro / DSM 804).